The following is a 427-amino-acid chain: Trigger factor (427 aa).

Residues 163–248 (GDTAVIDFEG…VHEIKAKELP (86 aa)) enclose the PPIase FKBP-type domain.

It belongs to the FKBP-type PPIase family. Tig subfamily.

The protein localises to the cytoplasm. It catalyses the reaction [protein]-peptidylproline (omega=180) = [protein]-peptidylproline (omega=0). Involved in protein export. Acts as a chaperone by maintaining the newly synthesized protein in an open conformation. Functions as a peptidyl-prolyl cis-trans isomerase. This chain is Trigger factor, found in Bacillus cytotoxicus (strain DSM 22905 / CIP 110041 / 391-98 / NVH 391-98).